We begin with the raw amino-acid sequence, 183 residues long: Acidic proline-rich protein HP43A (183 aa).

The N-terminal stretch at 1–14 is a signal peptide; that stretch reads MLVVLLTAALLAEH. The disordered stretch occupies residues 22-183; that stretch reads ISQLSEEEQQ…QGSEEQSTSL (162 aa). A compositionally biased stretch (acidic residues) spans 52–65; the sequence is SDEEGDDDGEEDGN. 5 consecutive repeat copies span residues 81–100, 101–120, 121–140, 141–160, and 161–180. A compositionally biased stretch (low complexity) spans 86-183; sequence GNQQGPPQQE…QGSEEQSTSL (98 aa).

Its subcellular location is the secreted. This is Acidic proline-rich protein HP43A (H29) from Mesocricetus auratus (Golden hamster).